The sequence spans 204 residues: V-set and transmembrane domain-containing protein 2-like protein (204 aa).

The signal sequence occupies residues 1-24 (MGAPLAVALGALHYLALFLQLGGA). The region spanning 41 to 158 (ALFTETPHDM…DGKARHHKVK (118 aa)) is the Ig-like domain. The cysteines at positions 62 and 142 are disulfide-linked. A disordered region spans residues 168–204 (NSVLHLPEAPPAAPAPPPPKPGKELRKRSVDQEACSL). Residues 175–187 (EAPPAAPAPPPPK) are compositionally biased toward pro residues. Over residues 188 to 198 (PGKELRKRSVD) the composition is skewed to basic and acidic residues.

The protein is V-set and transmembrane domain-containing protein 2-like protein (VSTM2L) of Homo sapiens (Human).